We begin with the raw amino-acid sequence, 314 residues long: Basic endochitinase (314 aa).

Residues 1 to 20 form the signal peptide; sequence MGLWALVAFCLLSLILVGSA. Positions 21-61 constitute a Chitin-binding type-1 domain; that stretch reads EQCGGQAGGRVCPGGACCSKFGWCGNTADYCGSGCQSQCSS. Disulfide bonds link cysteine 23-cysteine 38, cysteine 32-cysteine 44, cysteine 37-cysteine 51, cysteine 55-cysteine 59, cysteine 86-cysteine 148, cysteine 160-cysteine 168, and cysteine 267-cysteine 299. Catalysis depends on glutamate 130, which acts as the Proton donor.

The protein belongs to the glycosyl hydrolase 19 family. Chitinase class I subfamily.

It catalyses the reaction Random endo-hydrolysis of N-acetyl-beta-D-glucosaminide (1-&gt;4)-beta-linkages in chitin and chitodextrins.. In terms of biological role, defense against chitin-containing fungal pathogens. The chain is Basic endochitinase (CHIT1B) from Vitis vinifera (Grape).